The following is a 267-amino-acid chain: Putative phosphoenolpyruvate synthase regulatory protein (267 aa).

147–154 is a binding site for ADP; it reads GVSRSGKT.

The protein belongs to the pyruvate, phosphate/water dikinase regulatory protein family. PSRP subfamily.

The enzyme catalyses [pyruvate, water dikinase] + ADP = [pyruvate, water dikinase]-phosphate + AMP + H(+). The catalysed reaction is [pyruvate, water dikinase]-phosphate + phosphate + H(+) = [pyruvate, water dikinase] + diphosphate. Functionally, bifunctional serine/threonine kinase and phosphorylase involved in the regulation of the phosphoenolpyruvate synthase (PEPS) by catalyzing its phosphorylation/dephosphorylation. The polypeptide is Putative phosphoenolpyruvate synthase regulatory protein (Cupriavidus necator (strain ATCC 17699 / DSM 428 / KCTC 22496 / NCIMB 10442 / H16 / Stanier 337) (Ralstonia eutropha)).